The primary structure comprises 1130 residues: MHC class II transactivator (1130 aa).

The required for acetyltransferase activity stretch occupies residues 94 to 132 (AYANIAELDQYVFQDSQLEGLSKDIFKHIGPDEVIGESM). Residues 269-303 (PSGFTVHGLPTSPDRPGSTSPFAPSATDLPSMPEP) form a disordered region. Residues 414–724 (RVIAVLGKAG…CFLGALWLAL (311 aa)) enclose the NACHT domain. Residue 420-427 (GKAGQGKS) coordinates GTP. 4 LRR repeats span residues 985 to 1008 (SLQHLDLDALSENKIGDEGVSQLS), 1016 to 1037 (SLETLNLSQNNITDLGAYKLAE), 1045 to 1066 (SLLRLSLYNNCICDVGAESLAR), and 1073 to 1093 (SLRVMDVQYNKFTAAGAQQLA).

In terms of assembly, interacts with ZXDA and ZXDC. Interacts with PML (isoform PML-2). Interacts with TAF7; interaction inhibits CIITA acetyltransferase activity, thereby repressing transcription. Autophosphorylated, affecting interaction with TAF7.

The protein localises to the nucleus. The protein resides in the PML body. The enzyme catalyses L-seryl-[protein] + ATP = O-phospho-L-seryl-[protein] + ADP + H(+). It catalyses the reaction L-threonyl-[protein] + ATP = O-phospho-L-threonyl-[protein] + ADP + H(+). Essential for transcriptional activity of the HLA class II promoter; activation is via the proximal promoter. Does not bind DNA. May act in a coactivator-like fashion through protein-protein interactions by contacting factors binding to the proximal MHC class II promoter, to elements of the transcription machinery, or both PubMed:8402893, PubMed:7749984,. Alternatively it may activate HLA class II transcription by modifying proteins that bind to the MHC class II promoter. Also mediates enhanced MHC class I transcription; the promoter element requirements for CIITA-mediated transcription are distinct from those of constitutive MHC class I transcription, and CIITA can functionally replace TAF1 at these genes. Activates CD74 transcription. Exhibits intrinsic GTP-stimulated acetyltransferase activity. Exhibits serine/threonine protein kinase activity: can phosphorylate the TFIID component TAF7, the RAP74 subunit of the general transcription factor TFIIF, histone H2B at 'Ser-37' and other histones (in vitro). Has antiviral activity against Ebola virus and coronaviruses, including SARS-CoV-2. Induces resistance by up-regulation of the p41 isoform of CD74, which blocks cathepsin-mediated cleavage of viral glycoproteins, thereby preventing viral fusion. Functionally, exhibits dominant-negative suppression of MHC class II gene expression. The polypeptide is MHC class II transactivator (Homo sapiens (Human)).